Reading from the N-terminus, the 89-residue chain is Large ribosomal subunit protein eL43 (89 aa).

Zn(2+)-binding residues include Cys-38, Cys-41, Cys-56, and Cys-59. Residues 38 to 59 (CPVCHKRAVKRVGTGIWRCTKC) form a C4-type zinc finger.

It belongs to the eukaryotic ribosomal protein eL43 family. Putative zinc-binding subfamily. Part of the 50S ribosomal subunit. It depends on Zn(2+) as a cofactor.

Binds to the 23S rRNA. In Methanopyrus kandleri (strain AV19 / DSM 6324 / JCM 9639 / NBRC 100938), this protein is Large ribosomal subunit protein eL43.